Reading from the N-terminus, the 580-residue chain is Thymidine kinase (580 aa).

Disordered stretches follow at residues 1–60 (MAEG…KSVK) and 133–157 (VCGR…ASMG). Positions 137-149 (PPLPPPNHPPPAT) are enriched in pro residues. ATP is bound at residue 260–267 (GVMGVGKS). The active-site Proton acceptor is the glutamate 287. Residue glutamine 325 coordinates substrate. Arginine 415 contacts ATP. Arginine 421 contacts substrate.

The protein belongs to the herpesviridae thymidine kinase family. Homodimer.

It catalyses the reaction thymidine + ATP = dTMP + ADP + H(+). Catalyzes the transfer of the gamma-phospho group of ATP to thymidine to generate dTMP in the salvage pathway of pyrimidine synthesis. The dTMP serves as a substrate for DNA polymerase during viral DNA replication. Allows the virus to be reactivated and to grow in non-proliferative cells lacking a high concentration of phosphorylated nucleic acid precursors. The polypeptide is Thymidine kinase (Human herpesvirus 8 type P (isolate GK18) (HHV-8)).